The primary structure comprises 107 residues: Universal stress protein B homolog (107 aa).

Transmembrane regions (helical) follow at residues 6 to 25 (TILF…YVTA) and 89 to 106 (LFIL…VAFM).

Belongs to the universal stress protein B family.

The protein resides in the cell inner membrane. This is Universal stress protein B homolog from Vibrio cholerae serotype O1 (strain ATCC 39541 / Classical Ogawa 395 / O395).